The primary structure comprises 530 residues: Arginine-containing cyclodipeptide synthase pthA (530 aa).

A Conserved DDXXE motif motif is present at residues 419-423 (DDRAE).

Belongs to the arginine-containing cyclodipeptide synthase family.

The catalysed reaction is L-aspartyl-tRNA(Asp) + L-arginyl-tRNA(Arg) = cyclo(L-arginyl-L-aspartyl) + tRNA(Asp) + tRNA(Arg) + 2 H(+). Its pathway is secondary metabolite biosynthesis. Its function is as follows. Arginine-containing cyclodipeptide synthase; part of the cluster that mediates the biosynthesis of a highly modified cyclo-arginine-aspartate dipeptide (cRD). Within the pathway, pthA acts as the scaffold-generating enzyme and is responsible for formation of the cyclo-Arg-Asp diketopiperazine (cRW) from L-arginyl-tRNA(Arg) + L-aspartyl-tRNA(Asp). Additional enzymes from the cluster then further modify the cyclo-Arg-Asp diketopiperazine (cRW) scaffold. This chain is Arginine-containing cyclodipeptide synthase pthA, found in Penicillium thymicola.